The following is a 318-amino-acid chain: DNA repair nuclease/redox regulator APEX1 (318 aa).

The tract at residues 1 to 33 is necessary for interaction with YBX1, binding to RNA, association together with NPM1 to rRNA, endoribonuclease activity on abasic RNA and localization in the nucleoli; it reads MPKRGKKGAVAEDGDELKTEPEAKKSKTTAKKN. The interval 1–60 is disordered; sequence MPKRGKKGAVAEDGDELKTEPEAKKSKTTAKKNDKEAAGEGPALYEDPPDQKTSPSGKPA. Residues K6 and K7 each carry the N6-acetyllysine; by EP300 modification. The short motif at 8–13 is the Nuclear localization signal (NLS) element; sequence GAVAED. Positions 16 to 38 are enriched in basic and acidic residues; sequence ELKTEPEAKKSKTTAKKNDKEAA. The interval 23–33 is necessary for interaction with NPM1 and for efficient rRNA binding; it reads AKKSKTTAKKN. Residues K27, K31, K32, and K35 each carry the N6-acetyllysine modification. At S54 the chain carries Phosphoserine. The Nuclear export signal (NES) motif lies at 64–80; sequence ICSWNVDGLRAWIKKKG. The residue at position 65 (C65) is an S-nitrosocysteine; alternate. C65 and C93 are oxidised to a cystine. Mg(2+) is bound at residue D70. C93 bears the S-nitrosocysteine; alternate mark. Residue E96 participates in Mg(2+) binding. Residue Y171 is part of the active site. An N6-acetyllysine modification is found at K197. Mg(2+) is bound by residues D210 and N212. The active-site Proton donor/acceptor is D210. At T233 the chain carries Phosphothreonine; by CDK5. The segment at 289–318 is mitochondrial targeting sequence (MTS); that stretch reads HSLLTALCDSKIRSKALGSDHCPITLYLAL. D308 provides a ligand contact to Mg(2+). At C310 the chain carries S-nitrosocysteine.

Belongs to the DNA repair enzymes AP/ExoA family. Monomer. Homodimer; disulfide-linked. Component of the SET complex, composed of at least APEX1, SET, ANP32A, HMGB2, NME1 and TREX1. Associates with the dimer XRCC5/XRCC6 in a DNA-dependent manner. Interacts with SIRT1; the interaction is increased in the context of genotoxic stress. Interacts with HDAC1, HDAC2 and HDAC3; the interactions are not dependent on the APEX1 acetylation status. Interacts with XRCC1; the interaction is induced by SIRT1 and increased with the APEX1 acetylated form. Interacts with NPM1 (via N-terminal domain); the interaction is RNA-dependent and decreases in hydrogen peroxide-damaged cells. Interacts (via N-terminus) with YBX1 (via C-terminus); the interaction is increased in presence of APEX1 acetylated at Lys-6 and Lys-7. Interacts with HNRNPL; the interaction is DNA-dependent. Interacts (via N-terminus) with KPNA1 and KPNA2. Interacts with TXN; the interaction stimulates the FOS/JUN AP-1 complex DNA-binding activity in a redox-dependent manner. Interacts with GZMA, KRT8, MDM2, POLB, PRDX6, PRPF19, RPLP0, TOMM20 and WDR77. Binds to CDK5. Requires Mg(2+) as cofactor. Mn(2+) serves as cofactor. Phosphorylated. Phosphorylation by kinase PKC or casein kinase CK2 results in enhanced redox activity that stimulates binding of the FOS/JUN AP-1 complex to its cognate binding site. AP-endodeoxyribonuclease activity is not affected by CK2-mediated phosphorylation. Phosphorylation of Thr-233 by CDK5 in response to MPP(+)/MPTP (1-methyl-4-phenylpyridinium) reduces AP-endodeoxyribonuclease activity resulting in accumulation of DNA damage and contributing to neuronal death. Post-translationally, acetylated on Lys-6 and Lys-7. Acetylation is increased by the transcriptional coactivator EP300 acetyltransferase, genotoxic agents like H(2)O(2) and methyl methanesulfonate (MMS). Acetylation increases its binding affinity to the negative calcium response element (nCaRE) DNA promoter. The acetylated form induces a stronger binding of YBX1 to the Y-box sequence in the MDR1 promoter than the unacetylated form. Deacetylated on lysines. Lys-6 and Lys-7 are deacetylated by SIRT1. In terms of processing, cleaved at Lys-31 by granzyme A to create the mitochondrial form; leading in reduction of binding to DNA, AP endodeoxyribonuclease activity, redox activation of transcription factors and to enhanced cell death. Cleaved by granzyme K; leading to intracellular ROS accumulation and enhanced cell death after oxidative stress. Cys-69 and Cys-93 are nitrosylated in response to nitric oxide (NO) and lead to the exposure of the nuclear export signal (NES). Post-translationally, ubiquitinated by MDM2; leading to translocation to the cytoplasm and proteasomal degradation.

It localises to the nucleus. The protein resides in the nucleolus. Its subcellular location is the nucleus speckle. The protein localises to the endoplasmic reticulum. It is found in the cytoplasm. It localises to the mitochondrion. The catalysed reaction is a deoxyribonucleotide-2'-deoxyribose-5'-monophosphate-DNA + H2O = a 5'-end 2'-deoxyribose-5'-monophosphate-DNA + a 3'-end 2'-deoxyribonucleotide-DNA + H(+). It carries out the reaction Exonucleolytic cleavage in the 3'- to 5'-direction to yield nucleoside 5'-phosphates.. It catalyses the reaction a 3'-end 2'-deoxyribonucleotide-3'-phosphoglycolate-DNA + H2O = 2-phosphoglycolate + a 3'-end 2'-deoxyribonucleotide-DNA + H(+). The enzyme catalyses a 3'-end 2'-deoxyribonucleotide-8-oxoguanine-DNA + H2O = 8-oxo-dGMP + a 3'-end 2'-deoxyribonucleotide-DNA + H(+). With respect to regulation, NPM1 stimulates endodeoxyribonuclease activity on double-stranded DNA with AP sites, but inhibits endoribonuclease activity on single-stranded RNA containing AP sites. Multifunctional protein that plays a central role in the cellular response to oxidative stress. The two major activities of APEX1 are DNA repair and redox regulation of transcriptional factors. Functions as an apurinic/apyrimidinic (AP) endodeoxyribonuclease in the base excision repair (BER) pathway of DNA lesions induced by oxidative and alkylating agents. Initiates repair of AP sites in DNA by catalyzing hydrolytic incision of the phosphodiester backbone immediately adjacent to the damage, generating a single-strand break with 5'-deoxyribose phosphate and 3'-hydroxyl ends. Also incises at AP sites in the DNA strand of DNA/RNA hybrids, single-stranded DNA regions of R-loop structures, and single-stranded RNA molecules. Operates at switch sites of immunoglobulin (Ig) constant regions where it mediates Ig isotype class switch recombination. Processes AP sites induced by successive action of AICDA and UNG. Generates staggered nicks in opposite DNA strands resulting in the formation of double-strand DNA breaks that are finally resolved via non-homologous end joining repair pathway. Has 3'-5' exodeoxyribonuclease activity on mismatched deoxyribonucleotides at the 3' termini of nicked or gapped DNA molecules during short-patch BER. Possesses DNA 3' phosphodiesterase activity capable of removing lesions (such as phosphoglycolate and 8-oxoguanine) blocking the 3' side of DNA strand breaks. Also acts as an endoribonuclease involved in the control of single-stranded RNA metabolism. Plays a role in regulating MYC mRNA turnover by preferentially cleaving in between UA and CA dinucleotides of the MYC coding region determinant (CRD). In association with NMD1, plays a role in the rRNA quality control process during cell cycle progression. Acts as a loading factor for POLB onto non-incised AP sites in DNA and stimulates the 5'-terminal deoxyribose 5'-phosphate (dRp) excision activity of POLB. Exerts reversible nuclear redox activity to regulate DNA binding affinity and transcriptional activity of transcriptional factors by controlling the redox status of their DNA-binding domain, such as the FOS/JUN AP-1 complex after exposure to IR. Involved in calcium-dependent down-regulation of parathyroid hormone (PTH) expression by binding to negative calcium response elements (nCaREs). Together with HNRNPL or the dimer XRCC5/XRCC6, associates with nCaRE, acting as an activator of transcriptional repression. May also play a role in the epigenetic regulation of gene expression by participating in DNA demethylation. Stimulates the YBX1-mediated MDR1 promoter activity, when acetylated at Lys-6 and Lys-7, leading to drug resistance. Plays a role in protection from granzyme-mediated cellular repair leading to cell death. Binds DNA and RNA. Associates, together with YBX1, on the MDR1 promoter. Together with NPM1, associates with rRNA. The sequence is that of DNA repair nuclease/redox regulator APEX1 (APEX1) from Pongo pygmaeus (Bornean orangutan).